Reading from the N-terminus, the 548-residue chain is Membrane protein insertase YidC (548 aa).

The chain crosses the membrane as a helical span at residues 6–26; the sequence is NLLVIALLFVSFMIWQAWEQD. Residues 28–55 are disordered; that stretch reads NPQPQAQQTTQTTTTAAGSAADQGVPAS. Residues 30–50 show a composition bias toward low complexity; sequence QPQAQQTTQTTTTAAGSAADQ. 4 helical membrane-spanning segments follow: residues 350-370, 420-440, 458-478, and 499-519; these read FVGN…GIMY, LGGC…YYML, LSAQ…MFFI, and PVIF…YYIV.

It belongs to the OXA1/ALB3/YidC family. Type 1 subfamily. In terms of assembly, interacts with the Sec translocase complex via SecD. Specifically interacts with transmembrane segments of nascent integral membrane proteins during membrane integration.

It localises to the cell inner membrane. Required for the insertion and/or proper folding and/or complex formation of integral membrane proteins into the membrane. Involved in integration of membrane proteins that insert both dependently and independently of the Sec translocase complex, as well as at least some lipoproteins. Aids folding of multispanning membrane proteins. The chain is Membrane protein insertase YidC from Shigella dysenteriae serotype 1 (strain Sd197).